Reading from the N-terminus, the 224-residue chain is Serum amyloid P-component (224 aa).

A signal peptide spans 1 to 20; sequence MDKLLLWMFVFTSLLSEAFC. Residues 25–224 enclose the Pentraxin (PTX) domain; sequence KRKVFVFPRE…YVVIRPRVWD (200 aa). N-linked (GlcNAc...) asparagine glycosylation is present at N52. C56 and C115 are disulfide-bonded. Residues D78, N79, E156, Q157, D158, and Q168 each contribute to the Ca(2+) site.

Belongs to the pentraxin family. In terms of assembly, homopentamer. Pentraxin (or pentaxin) have a discoid arrangement of 5 non-covalently bound subunits. Ca(2+) is required as a cofactor.

The protein resides in the secreted. The chain is Serum amyloid P-component (Apcs) from Mus musculus (Mouse).